Here is a 161-residue protein sequence, read N- to C-terminus: MKELQDIARLSDRFISVELVNENLFDWNVKLHQVDKDSVLWQDMKETNTEFILLNLTFPDNFPFSPPFMRVLSPRLENGYVLDGGAICMELLTPRGWSSAYTVEAVMRQFAASLVKGQGRICRKAGKSKKSFSRKEAEATFKSLVKTHEKYGWVTPPVSDG.

The region spanning 1-154 is the UBC core domain; that stretch reads MKELQDIARL…VKTHEKYGWV (154 aa). Residue cysteine 88 is the Glycyl thioester intermediate of the active site.

The protein belongs to the ubiquitin-conjugating enzyme family. As to quaternary structure, interacts with FBXW7.

Its subcellular location is the nucleus. It carries out the reaction S-ubiquitinyl-[E1 ubiquitin-activating enzyme]-L-cysteine + [E2 ubiquitin-conjugating enzyme]-L-cysteine = [E1 ubiquitin-activating enzyme]-L-cysteine + S-ubiquitinyl-[E2 ubiquitin-conjugating enzyme]-L-cysteine.. Its pathway is protein modification; protein ubiquitination. In terms of biological role, probable E2 ubiquitin-protein ligase that catalyzes the covalent attachment of ubiquitin to target proteins. May facilitate the monoubiquitination and degradation of MTOR and CCNE1 through interaction with FBXW7. This is Ubiquitin-conjugating enzyme E2Q-like protein 1 (Ube2ql1) from Mus musculus (Mouse).